The sequence spans 361 residues: Chorismate synthase (361 aa).

NADP(+)-binding residues include Arg-48 and Arg-54. FMN is bound by residues Arg-125–Ser-127, Asn-238–Ala-239, Gly-278, Lys-293–Ser-297, and Arg-319.

The protein belongs to the chorismate synthase family. As to quaternary structure, homotetramer. FMNH2 serves as cofactor.

It carries out the reaction 5-O-(1-carboxyvinyl)-3-phosphoshikimate = chorismate + phosphate. Its pathway is metabolic intermediate biosynthesis; chorismate biosynthesis; chorismate from D-erythrose 4-phosphate and phosphoenolpyruvate: step 7/7. In terms of biological role, catalyzes the anti-1,4-elimination of the C-3 phosphate and the C-6 proR hydrogen from 5-enolpyruvylshikimate-3-phosphate (EPSP) to yield chorismate, which is the branch point compound that serves as the starting substrate for the three terminal pathways of aromatic amino acid biosynthesis. This reaction introduces a second double bond into the aromatic ring system. This chain is Chorismate synthase, found in Shigella flexneri.